The following is a 29-amino-acid chain: Cycloviolacin-O15 (29 aa).

A cross-link (cyclopeptide (Gly-Asn)) is located at residues 1-29; the sequence is GLVPCGETCFTGKCYTPGCSCSYPICKKN. 3 cysteine pairs are disulfide-bonded: Cys5–Cys19, Cys9–Cys21, and Cys14–Cys26.

This is a cyclic peptide.

In terms of biological role, probably participates in a plant defense mechanism. Has hemolytic activity. The polypeptide is Cycloviolacin-O15 (Viola odorata (Sweet violet)).